The primary structure comprises 309 residues: ADP,ATP carrier protein 1 (309 aa).

Solcar repeat units follow at residues 11 to 104 (SHFG…IKSL), 116 to 208 (KWFA…FKPV), and 216 to 302 (GSFV…LQLI). 5 helical membrane-spanning segments follow: residues 13–40 (FGVD…VKLL), 81–105 (TANV…KSLL), 114–134 (YAKW…LSLL), 184–205 (FVPS…YDSF), and 219–239 (VASF…SYPL). The ADP site is built by Arg86 and Lys98. Arg243 lines the ADP pocket. The tract at residues 243-248 (RRRMMM) is important for transport activity. The Nucleotide carrier signature motif signature appears at 243–248 (RRRMMM). The helical transmembrane segment at 279 to 299 (CGANIFRGVAAAGVISLYDQL) threads the bilayer.

This sequence belongs to the mitochondrial carrier (TC 2.A.29) family. In terms of assembly, monomer.

Its subcellular location is the mitochondrion inner membrane. It carries out the reaction ADP(in) + ATP(out) = ADP(out) + ATP(in). With respect to regulation, the matrix-open state (m-state) is inhibited by the membrane-permeable bongkrekic acid (BKA). The cytoplasmic-open state (c-state) is inhibited by the membrane-impermeable toxic inhibitor carboxyatractyloside (CATR). In terms of biological role, ADP:ATP antiporter that mediates import of ADP into the mitochondrial matrix for ATP synthesis, and export of ATP out to fuel the cell. Cycles between the cytoplasmic-open state (c-state) and the matrix-open state (m-state): operates by the alternating access mechanism with a single substrate-binding site intermittently exposed to either the cytosolic (c-state) or matrix (m-state) side of the inner mitochondrial membrane. This chain is ADP,ATP carrier protein 1 (AAC1), found in Saccharomyces cerevisiae (strain ATCC 204508 / S288c) (Baker's yeast).